A 293-amino-acid polypeptide reads, in one-letter code: 4-diphosphocytidyl-2-C-methyl-D-erythritol kinase (293 aa).

K16 is an active-site residue. Position 99 to 109 (99 to 109 (PMGAGLGGGSS)) interacts with ATP. Residue D141 is part of the active site.

Belongs to the GHMP kinase family. IspE subfamily.

It carries out the reaction 4-CDP-2-C-methyl-D-erythritol + ATP = 4-CDP-2-C-methyl-D-erythritol 2-phosphate + ADP + H(+). It participates in isoprenoid biosynthesis; isopentenyl diphosphate biosynthesis via DXP pathway; isopentenyl diphosphate from 1-deoxy-D-xylulose 5-phosphate: step 3/6. In terms of biological role, catalyzes the phosphorylation of the position 2 hydroxy group of 4-diphosphocytidyl-2C-methyl-D-erythritol. In Paraburkholderia phytofirmans (strain DSM 17436 / LMG 22146 / PsJN) (Burkholderia phytofirmans), this protein is 4-diphosphocytidyl-2-C-methyl-D-erythritol kinase.